Here is a 391-residue protein sequence, read N- to C-terminus: Steroid side-chain-cleaving aldolase (391 aa).

The Proton acceptor role is filled by Tyr294. The active-site Proton donor is the Tyr344.

The protein belongs to the thiolase-like superfamily. In terms of assembly, homodimer. Interacts with the ChsH1/ChsH2 hydratase via the DUF35 C-terminal region of ChsH2 (ChsH2-DUF35).

The enzyme catalyses 17-hydroxy-3-oxochol-4-en-22-oyl-CoA = androst-4-ene-3,17-dione + propanoyl-CoA. Functionally, probably involved in bile acid degradation. In vitro, when associated with the ChsH1/ChsH2 hydratase, catalyzes the retroaldol cleavage of 17-hydroxy-3-oxo-4-pregnene-20-carboxyl-CoA (17-HOPC-CoA), forming androst-4-ene-3,17-dione and propionyl-CoA. The in vivo substrate is probably a closely analogous bile acid degradation metabolite. This is Steroid side-chain-cleaving aldolase from Thermomonospora curvata (strain ATCC 19995 / DSM 43183 / JCM 3096 / KCTC 9072 / NBRC 15933 / NCIMB 10081 / Henssen B9).